Consider the following 101-residue polypeptide: Small ribosomal subunit protein uS14 (101 aa).

The protein belongs to the universal ribosomal protein uS14 family. Part of the 30S ribosomal subunit. Contacts proteins S3 and S10.

Functionally, binds 16S rRNA, required for the assembly of 30S particles and may also be responsible for determining the conformation of the 16S rRNA at the A site. This Cupriavidus necator (strain ATCC 17699 / DSM 428 / KCTC 22496 / NCIMB 10442 / H16 / Stanier 337) (Ralstonia eutropha) protein is Small ribosomal subunit protein uS14.